Reading from the N-terminus, the 447-residue chain is Argininosuccinate synthase (447 aa).

ATP is bound by residues 17–25 and A43; that span reads AFSGGLDTS. An L-citrulline-binding site is contributed by Y99. 2 residues coordinate ATP: G129 and T131. T131, N135, and D136 together coordinate L-aspartate. N135 is a binding site for L-citrulline. ATP is bound at residue D136. L-citrulline-binding residues include R139 and S192. D194 provides a ligand contact to ATP. The L-citrulline site is built by T201, E203, and E280.

Belongs to the argininosuccinate synthase family. Type 2 subfamily. As to quaternary structure, homotetramer.

Its subcellular location is the cytoplasm. It catalyses the reaction L-citrulline + L-aspartate + ATP = 2-(N(omega)-L-arginino)succinate + AMP + diphosphate + H(+). It participates in amino-acid biosynthesis; L-arginine biosynthesis; L-arginine from L-ornithine and carbamoyl phosphate: step 2/3. In Salmonella schwarzengrund (strain CVM19633), this protein is Argininosuccinate synthase.